A 270-amino-acid chain; its full sequence is MLGLQIFTLLSIPTLLYTYEIEPLERTSTPPEKELGYWCTYANHCRFCWDCQDGICRNKAFKNHSPILENNYIANCSIYRRNDFCIYYITSIKPHKTYRTECPQHINHERHEADIRKWQKLLTYGFYLAGCILAVNYIRKRSLQTVMYLLVFLVISFLLSQLMLYGELEDKKHKIGSIPPKRELEHWCTHGKYCNFCWDCQNGICKNKAFKNHPPIGENDFIRYDCWTTHLPNKCSYEKIYKHFNTHIMECSQPTHFKWYDNLMKKQDIM.

The first 26 residues, 1 to 26 (MLGLQIFTLLSIPTLLYTYEIEPLER), serve as a signal peptide directing secretion. Residues 27-117 (TSTPPEKELG…HERHEADIRK (91 aa)) are Extracellular-facing. The A repeat unit spans residues 27–146 (TSTPPEKELG…YIRKRSLQTV (120 aa)). Asparagine 75 is a glycosylation site (N-linked (GlcNAc...) asparagine; by host). Residues 118 to 138 (WQKLLTYGFYLAGCILAVNYI) traverse the membrane as a helical segment. At 139–145 (RKRSLQT) the chain is on the cytoplasmic side. Residues 146 to 166 (VMYLLVFLVISFLLSQLMLYG) form a helical membrane-spanning segment. One copy of the B repeat lies at 147-270 (MYLLVFLVIS…DNLMKKQDIM (124 aa)). Residues 167-270 (ELEDKKHKIG…DNLMKKQDIM (104 aa)) lie on the Extracellular side of the membrane.

This sequence belongs to the asfivirus MGF 110 family.

The protein resides in the membrane. In terms of biological role, plays a role in virus cell tropism, and may be required for efficient virus replication in macrophages. This chain is Protein MGF 110-1L, found in Ornithodoros (relapsing fever ticks).